We begin with the raw amino-acid sequence, 86 residues long: MAHKKAGGSTRNGRDSESKRLGVKRFGGESVLAGNIIVRQRGTKFHAGTNVGIGKDHTLFALSDGKVKFEVKGPNNRKFVSIETAE.

The disordered stretch occupies residues 1–22 (MAHKKAGGSTRNGRDSESKRLG).

This sequence belongs to the bacterial ribosomal protein bL27 family.

This chain is Large ribosomal subunit protein bL27, found in Vibrio cholerae serotype O1 (strain ATCC 39315 / El Tor Inaba N16961).